The sequence spans 1230 residues: Ubiquitin carboxyl-terminal hydrolase 15 (1230 aa).

In terms of domain architecture, MATH spans 39–179 (EDSFTWNIPD…EGTLNITAYV (141 aa)). In terms of domain architecture, USP spans 205-536 (VGFRNQGATC…SAYMLVYIRQ (332 aa)). Catalysis depends on Cys214, which acts as the Nucleophile. Residue His465 is the Proton acceptor of the active site.

This sequence belongs to the peptidase C19 family. As to quaternary structure, interacts with PEX6; promoting association with the PEX1-PEX6 ATPase complex.

It is found in the cytoplasm. The protein resides in the cytosol. The protein localises to the peroxisome. It carries out the reaction Thiol-dependent hydrolysis of ester, thioester, amide, peptide and isopeptide bonds formed by the C-terminal Gly of ubiquitin (a 76-residue protein attached to proteins as an intracellular targeting signal).. Functionally, deubiquitinase involved in peroxisome import by mediating deubiquitination of the peroxisomal import receptor PEX5. Catalyzes deubiquitination of both monoubiquitiated and polyubiquitinated forms of PEX5 following its retrotranslocation into the cytosol, resetting PEX5 for a subsequent import cycle. The protein is Ubiquitin carboxyl-terminal hydrolase 15 of Saccharomyces cerevisiae (strain ATCC 204508 / S288c) (Baker's yeast).